The sequence spans 840 residues: Aconitase AMT8 (840 aa).

258-260 (DSH) contacts substrate. [4Fe-4S] cluster contacts are provided by cysteine 450, cysteine 513, and cysteine 516. Residues arginine 536, arginine 541, and 709 to 710 (SR) contribute to the substrate site.

The protein belongs to the aconitase/IPM isomerase family.

It functions in the pathway mycotoxin biosynthesis. Functionally, aconitase; part of the gene clusters that mediate the biosynthesis of AM-toxins, host-selective toxins (HSTs) causing Alternaria blotch on apple, a worldwide distributed disease. AM-toxins are cyclic depsipeptides containing the 3 residues 2-hydroxy-isovaleric acid (2-HIV), dehydroalanine, L-alanine which are common for all 3 AM-toxins I to III. The fourth precursor is L-alpha-amino-methoxyphenyl-valeric acid (L-Amv) for AM-toxin I, L-alpha-amino-phenyl-valeric acid (L-Apv) for AM-toxin II, and L-alpha-amino-hydroxyphenyl-valeric acid (L-Ahv) for AM-toxin III. AM-toxins have two target sites for affecting susceptible apple cells; they cause invagination of the plasma membrane and electrolyte loss and chloroplast disorganization. The non-ribosomal peptide synthetase AMT1 contains 4 catalytic modules and is responsible for activation of each residue in AM-toxin. The aldo-keto reductase AMT2 catalyzes the conversion of 2-keto-isovaleric acid (2-KIV) to 2-hydroxy-isovaleric acid (2-HIV), one of the precursor residues incorporated by AMT1 during AM-toxin biosynthesis, by reduction of its ketone to an alcohol. The cytochrome P450 monooxygenase AMT3 and the thioesterase AMT4 are also important for AM-toxin production, but their exact function within the AM-toxin biosynthesis are not known yet. Up to 21 proteins (including AMT1 to AMT4) are predicted to be involved in AM-toxin biosynthesis since their expression ishighly up-regulated in AM-toxin-producing cultures. This chain is Aconitase AMT8, found in Alternaria alternata (Alternaria rot fungus).